A 342-amino-acid polypeptide reads, in one-letter code: BAG family molecular chaperone regulator 1 (342 aa).

The interval 1-41 (MMKMMRNKPTNLPTAGMTNGGRGSGGGGGGGGRESGGRDLE) is disordered. Over residues 8-17 (KPTNLPTAGM) the composition is skewed to polar residues. Gly residues predominate over residues 18–34 (TNGGRGSGGGGGGGGRE). Residues 65–141 (PMIRVRIKYG…MVLIEDPLSQ (77 aa)) form the Ubiquitin-like domain. One can recognise a BAG domain in the interval 160-238 (AISDISLEVD…NYVETLDALK (79 aa)). S298 carries the phosphoserine modification.

Binds to the ATPase domain of HSP70/HSC70 chaperones.

In terms of biological role, co-chaperone that regulates diverse cellular pathways, such as programmed cell death and stress responses. In Arabidopsis thaliana (Mouse-ear cress), this protein is BAG family molecular chaperone regulator 1 (BAG1).